The following is a 93-amino-acid chain: Pyrimidine/purine nucleoside phosphorylase (93 aa).

It belongs to the nucleoside phosphorylase PpnP family.

The catalysed reaction is a purine D-ribonucleoside + phosphate = a purine nucleobase + alpha-D-ribose 1-phosphate. It catalyses the reaction adenosine + phosphate = alpha-D-ribose 1-phosphate + adenine. It carries out the reaction cytidine + phosphate = cytosine + alpha-D-ribose 1-phosphate. The enzyme catalyses guanosine + phosphate = alpha-D-ribose 1-phosphate + guanine. The catalysed reaction is inosine + phosphate = alpha-D-ribose 1-phosphate + hypoxanthine. It catalyses the reaction thymidine + phosphate = 2-deoxy-alpha-D-ribose 1-phosphate + thymine. It carries out the reaction uridine + phosphate = alpha-D-ribose 1-phosphate + uracil. The enzyme catalyses xanthosine + phosphate = alpha-D-ribose 1-phosphate + xanthine. Functionally, catalyzes the phosphorolysis of diverse nucleosides, yielding D-ribose 1-phosphate and the respective free bases. Can use uridine, adenosine, guanosine, cytidine, thymidine, inosine and xanthosine as substrates. Also catalyzes the reverse reactions. The polypeptide is Pyrimidine/purine nucleoside phosphorylase (Pseudomonas savastanoi pv. phaseolicola (strain 1448A / Race 6) (Pseudomonas syringae pv. phaseolicola (strain 1448A / Race 6))).